A 107-amino-acid polypeptide reads, in one-letter code: MINIDPPSGDYPASGGSSTHYIVSESESRLAFKVKSSNNESYRVRPVYGFVDAKGKAKLEVNRLAGPAKEDKLVIQYAEVPADETDPKAPFAAGAQQGEVVVKMVAS.

Residues 1 to 107 (MINIDPPSGD…GEVVVKMVAS (107 aa)) form the MSP domain.

As to expression, expressed at higher level in testis.

This chain is Sperm-specific class P protein 31 (ssp-31), found in Caenorhabditis elegans.